The primary structure comprises 89 residues: Phytosulfokines 1 (89 aa).

The N-terminal stretch at 1-22 (MVNPGRTARALCLLCLALLLLG) is a signal peptide. Positions 23–79 (QDTHSRKLLLQEKHSHGVGNGTTTTQEPSRENGGSTGSNNNGQLQFDSAKWEEFHTD) are excised as a propeptide. The tract at residues 33–68 (QEKHSHGVGNGTTTTQEPSRENGGSTGSNNNGQLQF) is disordered. An N-linked (GlcNAc...) asparagine glycan is attached at N42. 2 positions are modified to sulfotyrosine: Y80 and Y82. Residues 85–89 (DVKNP) constitute a propeptide that is removed on maturation.

It belongs to the phytosulfokine family. In terms of processing, sulfation is important for activity and for the binding to a putative membrane receptor. Post-translationally, PSK-alpha is produced by endopeptidase digestion. PSK-beta is produced from PSK-alpha by exopeptidase digestion. In terms of tissue distribution, expressed throughout the seedling. More abundant in fragments containing shoot or root apexes where cells proliferate vigorously.

The protein resides in the secreted. In terms of biological role, promotes plant cell differentiation, organogenesis and somatic embryogenesis as well as cell proliferation. In Oryza sativa subsp. indica (Rice), this protein is Phytosulfokines 1 (PSK1).